A 640-amino-acid chain; its full sequence is MGFSGSRANTALGAWSKWLTLCLAMTQPFSVTAKSAADYYVHSLPGQPEGPLLKMHAGHIEISPETSGNLFFWHFENRHIADKPRTVVWLNGGPGCSSEDGALMEIGPYRLIDKETLNYTEGSWDEFANLLFVDQPVGTGFSYGSTEHYVHELDEMASQFVTFLEKWFEIFPHYEPDDLYFAGESYAGQYIPYIARAILDRNKKQDVLANNRVWNLKGLLIGNGWISPQHQYPAYLPYVYQEGVVQGGTQEANLIEAKAAKCMKELNVEDTTGTVHIPDCEDILQAILDYTHKGKRCINMYDIRLTDEYSACGMNWPPDLKDVQPYLRRKDVVKALHINEEKQTGWTECAGAVGSSFKARKSKPAVELLPGLLEEGLPILLFSGQKDLICNHIGTEDMIKNMKWSGGTGFELSPGVWAPRQYWTFEGEPAGIYQQARNLTYVLFYNASHMVPFDYPRRTRDMLDKFLGVDITHIGGDPADSRIDGEKGPTTSVGAHPNSTAAAEREKEKLNTAAWKAYYKSGEVALIIVSTAAVVWGIFLWRSRRKHQSSGYRSIYPMLGLNSTGSLGRFSHKHSRGNGDIEAADFDETELDGQPSQAFLSRSSGDGETYAVGEESSDEEDGASDGQQLMFDQSRGEGRS.

Residues 1–24 form the signal peptide; that stretch reads MGFSGSRANTALGAWSKWLTLCLA. Topologically, residues 25-520 are lumenal; sequence MTQPFSVTAK…NTAAWKAYYK (496 aa). A glycan (N-linked (GlcNAc...) asparagine) is linked at Asn118. Residues Ser185 and Asp387 contribute to the active site. N-linked (GlcNAc...) asparagine glycosylation is found at Asn438 and Asn446. Residue His449 is part of the active site. Residues 478 to 503 are disordered; that stretch reads PADSRIDGEKGPTTSVGAHPNSTAAA. Polar residues predominate over residues 489–501; the sequence is PTTSVGAHPNSTA. Asn498 is a glycosylation site (N-linked (GlcNAc...) asparagine). The chain crosses the membrane as a helical span at residues 521-541; the sequence is SGEVALIIVSTAAVVWGIFLW. The Cytoplasmic portion of the chain corresponds to 542–640; it reads RSRRKHQSSG…FDQSRGEGRS (99 aa). The segment at 590–640 is disordered; the sequence is ELDGQPSQAFLSRSSGDGETYAVGEESSDEEDGASDGQQLMFDQSRGEGRS. The span at 594–606 shows a compositional bias: polar residues; the sequence is QPSQAFLSRSSGD.

It belongs to the peptidase S10 family.

Its subcellular location is the golgi apparatus. It localises to the trans-Golgi network membrane. The enzyme catalyses Preferential release of a C-terminal arginine or lysine residue.. Functionally, protease with a carboxypeptidase B-like function involved in the C-terminal processing of the lysine and arginine residues from protein precursors. Promotes cell fusion and is involved in the programmed cell death. This Paracoccidioides lutzii (strain ATCC MYA-826 / Pb01) (Paracoccidioides brasiliensis) protein is Pheromone-processing carboxypeptidase KEX1 (KEX1).